Here is a 66-residue protein sequence, read N- to C-terminus: Large ribosomal subunit protein uL29 (66 aa).

The protein belongs to the universal ribosomal protein uL29 family.

The sequence is that of Large ribosomal subunit protein uL29 from Rhizobium leguminosarum bv. trifolii (strain WSM2304).